The primary structure comprises 345 residues: MAWRSGLCETDSRTLKQFLQEECMWKLVGKSRKHREYRAVACRSTIFSPEDDGSCILCQLLLFYRDGEWILCLCCNGRYQGHYGVGHVHRRRRRICHLPTLYQLSFGGPLGPASIDFLPSFSQVTSSMTCDGITPDVIYEVCMLVPQDEAKRILVKGHGAMDLTCQKAVTLGGAGAWLLPRPEGYTLFFYILCYDLFTSCGNRCDIPSMTRLMAAATACGQAGCSFCTDHEGHVDPTGNYVGCTPDMGRCLCYVPCGPMTQSLIHNEEPATFFCESDDAKYLCAVGSKTAAQVTLGDGLDYHIGVKDSEGRWLPVKTDVWDLVKVEEPVSRMIVCSCPVLKNLVH.

Positions K26 to R35 are nuclear localization signal 1. The interval C55–F63 is nuclear export signal. The nuclear localization signal 2 stretch occupies residues R90–R94.

Belongs to the herpesviridae cytoplasmic envelopment protein 2 family. Interacts with cytoplasmic envelopment protein 3 and with the capsid. Interacts with host STING1; this interaction prevents viral DNA-triggered antiviral immune response.

The protein localises to the virion tegument. It localises to the host cytoplasm. Its subcellular location is the host nucleus. Functionally, plays a critical role in cytoplasmic virus egress. Participates in the final step of tegumentation and envelope acquisition within the host cytoplasm by directly interacting with the capsid. Upon virion binding to target cell, a signaling cascade is triggered to disrupt the interaction with the capsid, thereby preparing capsid uncoating. Additionally, antagonizes the viral DNA-triggered antiviral immune response by targeting host STING1 and preventing its dimerization and trafficking. In Homo sapiens (Human), this protein is Cytoplasmic envelopment protein 2 (UL94).